Consider the following 1063-residue polypeptide: Lysine-specific demethylase phf2 (1063 aa).

The PHD-type zinc finger occupies 5-56; it reads PVYCICRLPYDVTQFMIECDACKDWFHGSCVGVDEDEAPDIDIYHCPNCEKT. The JmjC domain occupies 197-353; sequence FSDARMANIV…MQMRAYEVEK (157 aa). Threonine 246 is a 2-oxoglutarate binding site. Fe cation-binding residues include histidine 249 and glutamate 251. The 2-oxoglutarate site is built by tyrosine 259 and lysine 266. Asparagine 321 contacts Fe cation. Disordered regions lie at residues 448–546, 704–761, 773–864, and 879–1045; these read VSDS…LAAL, NIKE…SAGI, GIDY…DMFD, and YVYP…MATA. The segment covering 460–477 has biased composition (low complexity); sequence SEPSNSKPPAEEPPSALS. Basic and acidic residues-rich tracts occupy residues 513 to 540 and 723 to 745; these read PPKEPKIKEGGKKKAKKVKEGVIPEKKP and KSPDTSDEESLHIDTEAKTDVKG. Residues 746-755 are compositionally biased toward basic residues; it reads RNSKVSKKKG. The segment covering 776–791 has biased composition (polar residues); the sequence is YSNNSQPPASPSTQEA. Over residues 813 to 833 the composition is skewed to low complexity; sequence SNSQAKNNSHSSAASKKPSGA. Residues 842-852 are compositionally biased toward basic residues; it reads RPAKRLPKKTQ. Over residues 920–929 the composition is skewed to basic and acidic residues; the sequence is RQERPAREGA. Residues 953-964 show a composition bias toward basic residues; that stretch reads IKKKKKSAKKKP. Positions 965–975 are enriched in basic and acidic residues; it reads IVAEESHKLSH. Composition is skewed to low complexity over residues 976–988 and 1021–1031; these read DSSSPEPTPDSES and SSSSSSQNASS. At serine 1021 the chain carries Phosphoserine; by PKA.

This sequence belongs to the JHDM1 histone demethylase family. JHDM1D subfamily.

Its subcellular location is the nucleus. It is found in the nucleolus. It localises to the chromosome. The protein localises to the centromere. The protein resides in the kinetochore. Its function is as follows. Lysine demethylase that demethylates both histones and non-histone proteins. Mediates demethylation of dimethylated 'Lys-9' of histone H3 (H3K9me2). Recruited to trimethylated 'Lys-4' of histone H3 (H3K4me3) at rDNA promoters and promotes expression of rDNA. In Danio rerio (Zebrafish), this protein is Lysine-specific demethylase phf2 (phf2).